The following is a 605-amino-acid chain: Poly [ADP-ribose] polymerase 2-B (605 aa).

The interval 96–122 (NAAAAAAVTDGGDQDKTKSAKDDDGDD) is disordered. The span at 108-122 (DQDKTKSAKDDDGDD) shows a compositional bias: basic and acidic residues. The 108-residue stretch at 153–260 (AYHVLQVGDE…TKLETRTASF (108 aa)) folds into the WGR domain. In terms of domain architecture, PARP alpha-helical spans 250–370 (ETKLETRTAS…EIEIAIKLLE (121 aa)). The 228-residue stretch at 378 to 605 (HPLYARYKQF…NVNFNFKRWG (228 aa)) folds into the PARP catalytic domain.

This sequence belongs to the ARTD/PARP family.

The protein localises to the nucleus. It carries out the reaction NAD(+) + (ADP-D-ribosyl)n-acceptor = nicotinamide + (ADP-D-ribosyl)n+1-acceptor + H(+).. It catalyses the reaction L-aspartyl-[protein] + NAD(+) = 4-O-(ADP-D-ribosyl)-L-aspartyl-[protein] + nicotinamide. The enzyme catalyses L-glutamyl-[protein] + NAD(+) = 5-O-(ADP-D-ribosyl)-L-glutamyl-[protein] + nicotinamide. Its function is as follows. Involved in the base excision repair (BER) pathway, by catalyzing the poly(ADP-ribosyl)ation of a limited number of acceptor proteins involved in chromatin architecture and in DNA metabolism. This modification follows DNA damages and appears as an obligatory step in a detection/signaling pathway leading to the reparation of DNA strand breaks. This chain is Poly [ADP-ribose] polymerase 2-B (PARP2-B), found in Oryza sativa subsp. japonica (Rice).